The primary structure comprises 506 residues: MIDNVITAIDRVAAEHPTRVAYDYEGTQYTYAQLKEGSDRLAGFFAETLPEHEPIIVYGGQTFDMVEVFLGLSKSGHAYIPIDTHSPNERITQVQDVAHTPAIIEVAPLPIAVPDVQIIRAPALHEAEKTHAPISSLQHAVVGDDNYYIIFTSGTTGKPKGVQISHDNLLSYVNWNISDFGLKEGVVAMSQPPYSFDLSVMDLYPTLVLGGTLKALPKEVTDNFKTLFATLPKLGLNEWVSTPSFAEIALLDPNFNQDNYPDLTHFLFCGEELVNKTAQELITRFPKATVYNTYGPTETTVAVTGMAITQDIVDQYPRLPIGFAKPDTEIFVVDEQGNQVSAGTEGELMIVGPSVSKGYLNNPEKTAKAFFNVGSQRGYRSGDLATMTEDGMIFYRGRTDFQVKLHGYRIELEDVDHNLNQVSYIKQASTVPRYNKDHKVAQLIAFAVAKPNDFESDMKLTQAVKAELGKMVMEYMIPQRIIYRDKLPLTANGKVDRKALIAEVNH.

152 to 153 is a binding site for ATP; the sequence is TS. Asp197 contributes to the D-alanine binding site. Residue 292–297 coordinates ATP; it reads NTYGPT. Residue Val301 participates in D-alanine binding. ATP contacts are provided by residues Asp383, 395-398, and Lys494; that span reads YRGR. Lys494 lines the D-alanine pocket.

This sequence belongs to the ATP-dependent AMP-binding enzyme family. DltA subfamily.

Its subcellular location is the cytoplasm. It catalyses the reaction holo-[D-alanyl-carrier protein] + D-alanine + ATP = D-alanyl-[D-alanyl-carrier protein] + AMP + diphosphate. The protein operates within cell wall biogenesis; lipoteichoic acid biosynthesis. In terms of biological role, catalyzes the first step in the D-alanylation of lipoteichoic acid (LTA), the activation of D-alanine and its transfer onto the D-alanyl carrier protein (Dcp) DltC. In an ATP-dependent two-step reaction, forms a high energy D-alanyl-AMP intermediate, followed by transfer of the D-alanyl residue as a thiol ester to the phosphopantheinyl prosthetic group of the Dcp. D-alanylation of LTA plays an important role in modulating the properties of the cell wall in Gram-positive bacteria, influencing the net charge of the cell wall. This is D-alanine--D-alanyl carrier protein ligase from Lacticaseibacillus paracasei (strain ATCC 334 / BCRC 17002 / CCUG 31169 / CIP 107868 / KCTC 3260 / NRRL B-441) (Lactobacillus paracasei).